We begin with the raw amino-acid sequence, 297 residues long: MLPQEIVYTKLSSTETQNGWIDFLTTKPLASQGIEWTPLIPTAHVLSIFMVLFMIAILTAVYYTKLKKLKPTEPPTGYVLVVQLLILQFENLTVDLLGEKNRRLSLLFIIIFVYILISNLMSMVGGIAAPTSSSTVTFSLGLMSFFGTFIMGVKYQKLAYFRDFFVIIKIKKKTIPLMINPLNVIGYFAPLLSISLRLWGNVLAGSIFIALLYSLFRTFFTLWSPSSFSVGLVFGTLAGGLVIPAFHVYFDILVSAIQAFVFVSLMLTYWSQPIKAAENAAEEKGQQMIENQRLNVK.

A run of 8 helical transmembrane segments spans residues 38 to 58 (PLIPTAHVLSIFMVLFMIAIL), 77 to 97 (GYVLVVQLLILQFENLTVDLL), 107 to 127 (LFIIIFVYILISNLMSMVGGI), 133 to 153 (SSTVTFSLGLMSFFGTFIMGV), 174 to 194 (TIPLMINPLNVIGYFAPLLSI), 202 to 222 (VLAGSIFIALLYSLFRTFFTL), 230 to 250 (VGLVFGTLAGGLVIPAFHVYF), and 252 to 272 (ILVSAIQAFVFVSLMLTYWSQ).

This sequence belongs to the ATPase A chain family. As to quaternary structure, F-type ATPases have 2 components, CF(1) - the catalytic core - and CF(0) - the membrane proton channel. CF(1) has five subunits: alpha(3), beta(3), gamma(1), delta(1), epsilon(1). CF(0) has three main subunits: a(1), b(2) and c(9-12). The alpha and beta chains form an alternating ring which encloses part of the gamma chain. CF(1) is attached to CF(0) by a central stalk formed by the gamma and epsilon chains, while a peripheral stalk is formed by the delta and b chains.

The protein localises to the cell membrane. Functionally, key component of the proton channel; it plays a direct role in the translocation of protons across the membrane. This Mycoplasmoides gallisepticum (strain R(low / passage 15 / clone 2)) (Mycoplasma gallisepticum) protein is ATP synthase subunit a.